A 198-amino-acid chain; its full sequence is Recombination protein RecR (198 aa).

The segment at 57–72 (CSVCGHITDKDPCYIC) adopts a C4-type zinc-finger fold. The 96-residue stretch at 80 to 175 (SVICVVQESK…KVTRIAHGLP (96 aa)) folds into the Toprim domain.

It belongs to the RecR family.

In terms of biological role, may play a role in DNA repair. It seems to be involved in an RecBC-independent recombinational process of DNA repair. It may act with RecF and RecO. This is Recombination protein RecR from Listeria monocytogenes serotype 4b (strain CLIP80459).